We begin with the raw amino-acid sequence, 705 residues long: Effector protein hopD1 (705 aa).

Composition is skewed to polar residues over residues 1–11 (MNPLRSIQHNI) and 28–41 (QAQQ…SPSQ). Disordered stretches follow at residues 1 to 41 (MNPL…SPSQ) and 173 to 207 (SSSL…DSGS). A compositionally biased stretch (low complexity) spans 173 to 184 (SSSLETPLLSSP).

The protein localises to the secreted. Its function is as follows. Effector protein involved in non-host recognition. In Pseudomonas syringae pv. tomato (strain ATCC BAA-871 / DC3000), this protein is Effector protein hopD1 (hopD1).